A 124-amino-acid polypeptide reads, in one-letter code: Small ribosomal subunit protein bS16 (124 aa).

Residues 84-110 (EKAERKNLKKGEPGKAAKERAEKRAAR) are compositionally biased toward basic and acidic residues. The segment at 84 to 124 (EKAERKNLKKGEPGKAAKERAEKRAAREAAANAPAEEAASE) is disordered. Over residues 111–124 (EAAANAPAEEAASE) the composition is skewed to low complexity.

This sequence belongs to the bacterial ribosomal protein bS16 family.

In Paracoccus denitrificans (strain Pd 1222), this protein is Small ribosomal subunit protein bS16.